A 265-amino-acid polypeptide reads, in one-letter code: Aquaporin-5 (265 aa).

Topologically, residues 1 to 12 (MKKEVCSVAFLK) are cytoplasmic. A helical membrane pass occupies residues 13–33 (AVFAEFLATLIFVFFGLGSAL). Residues 34–39 (KWPSAL) lie on the Extracellular side of the membrane. A helical membrane pass occupies residues 40–60 (PTILQIALAFGLAIGTLAQAL). The Cytoplasmic segment spans residues 61–65 (GPVSG). Positions 66 to 74 (GHINPAITL) form an intramembrane region, discontinuously helical. The NPA 1 signature appears at 69 to 71 (NPA). Residues 75-87 (ALLVGNQISLLRA) are Cytoplasmic-facing. The chain crosses the membrane as a helical span at residues 88-108 (FFYVAAQLVGAIAGAGILYGV). At 109 to 126 (APLNARGNLAVNALNNNT) the chain is on the extracellular side. 2 N-linked (GlcNAc...) asparagine glycosylation sites follow: N124 and N125. A helical membrane pass occupies residues 127 to 147 (TQGQAMVVELILTFQLALCIF). Over 148–158 (ASTDSRRTSPV) the chain is Cytoplasmic. Residues 159–179 (GSPALSIGLSVTLGHLVGIYF) form a helical membrane-spanning segment. Residue T180 is a topological domain, extracellular. Positions 181–191 (GCSMNPARSFG) form an intramembrane region, discontinuously helical. Residues 185 to 187 (NPA) carry the NPA 2 motif. Over 192–203 (PAVVMNRFSPAH) the chain is Extracellular. A helical membrane pass occupies residues 204–224 (WVFWVGPIVGAVLAAILYFYL). The Cytoplasmic segment spans residues 225-265 (LFPNSLSLSERVAIIKGTYEPDEDWEEQREERKKTMELTTR).

Belongs to the MIP/aquaporin (TC 1.A.8) family. Homotetramer; each monomer provides an independent water pore. Interacts with TRPV4; the interaction is probably indirect and regulates TRPV4 activation by hypotonicity. Detected in skin eccrine sweat glands, at the apical cell membrane and at intercellular canaliculi (at protein level).

The protein localises to the apical cell membrane. The protein resides in the cell membrane. It localises to the cytoplasmic vesicle membrane. The enzyme catalyses H2O(in) = H2O(out). Its function is as follows. Aquaporins form homotetrameric transmembrane channels, with each monomer independently mediating water transport across the plasma membrane along its osmotic gradient. Plays an important role in fluid secretion in salivary glands. Required for TRPV4 activation by hypotonicity. Together with TRPV4, controls regulatory volume decrease in salivary epithelial cells. Seems to play a redundant role in water transport in the eye, lung and in sweat glands. The protein is Aquaporin-5 of Homo sapiens (Human).